Here is a 725-residue protein sequence, read N- to C-terminus: Ribosomal RNA large subunit methyltransferase K/L (725 aa).

The THUMP domain maps to 46 to 157 (VAYRLCLWSR…RGEAVLSLDL (112 aa)).

It belongs to the methyltransferase superfamily. RlmKL family.

It is found in the cytoplasm. It catalyses the reaction guanosine(2445) in 23S rRNA + S-adenosyl-L-methionine = N(2)-methylguanosine(2445) in 23S rRNA + S-adenosyl-L-homocysteine + H(+). It carries out the reaction guanosine(2069) in 23S rRNA + S-adenosyl-L-methionine = N(2)-methylguanosine(2069) in 23S rRNA + S-adenosyl-L-homocysteine + H(+). Functionally, specifically methylates the guanine in position 2445 (m2G2445) and the guanine in position 2069 (m7G2069) of 23S rRNA. The polypeptide is Ribosomal RNA large subunit methyltransferase K/L (Ectopseudomonas mendocina (strain ymp) (Pseudomonas mendocina)).